The following is a 379-amino-acid chain: UDP-4-amino-4-deoxy-L-arabinose--oxoglutarate aminotransferase (379 aa).

An N6-(pyridoxal phosphate)lysine modification is found at lysine 183.

The protein belongs to the DegT/DnrJ/EryC1 family. ArnB subfamily. As to quaternary structure, homodimer. It depends on pyridoxal 5'-phosphate as a cofactor.

The catalysed reaction is UDP-4-amino-4-deoxy-beta-L-arabinose + 2-oxoglutarate = UDP-beta-L-threo-pentopyranos-4-ulose + L-glutamate. It functions in the pathway nucleotide-sugar biosynthesis; UDP-4-deoxy-4-formamido-beta-L-arabinose biosynthesis; UDP-4-deoxy-4-formamido-beta-L-arabinose from UDP-alpha-D-glucuronate: step 2/3. It participates in bacterial outer membrane biogenesis; lipopolysaccharide biosynthesis. Functionally, catalyzes the conversion of UDP-4-keto-arabinose (UDP-Ara4O) to UDP-4-amino-4-deoxy-L-arabinose (UDP-L-Ara4N). The modified arabinose is attached to lipid A and is required for resistance to polymyxin and cationic antimicrobial peptides. The protein is UDP-4-amino-4-deoxy-L-arabinose--oxoglutarate aminotransferase of Pseudomonas fluorescens (strain ATCC BAA-477 / NRRL B-23932 / Pf-5).